We begin with the raw amino-acid sequence, 183 residues long: NEDD8-conjugating enzyme Ubc12 (183 aa).

Methionine 1 is modified (N-acetylmethionine). The disordered stretch occupies residues 1 to 28 (MIKLFSLKQQKKEEESAGGTKGSSKKAS). The 145-residue stretch at 29 to 173 (AAQLRIQKDI…VQRSMRGGYI (145 aa)) folds into the UBC core domain. The active-site Glycyl thioester intermediate is the cysteine 111.

The protein belongs to the ubiquitin-conjugating enzyme family. UBC12 subfamily. In terms of processing, the acetylation of Met-1 increases affinity for DCUN1D1 by about 2 orders of magnitude and is crucial for NEDD8 transfer to cullins.

It carries out the reaction [E1 NEDD8-activating enzyme]-S-[NEDD8 protein]-yl-L-cysteine + [E2 NEDD8-conjugating enzyme]-L-cysteine = [E1 NEDD8-activating enzyme]-L-cysteine + [E2 NEDD8-conjugating enzyme]-S-[NEDD8-protein]-yl-L-cysteine.. The protein operates within protein modification; protein neddylation. Functionally, accepts the ubiquitin-like protein NEDD8 from the UBA3-NAE1 E1 complex and catalyzes its covalent attachment to other proteins. The specific interaction with the E3 ubiquitin ligase rbx1, but not rbx2, suggests that the rbx1-ube2m complex neddylates specific target proteins, such as cul1, cul2, cul3 and cul4. Involved in cell proliferation. The sequence is that of NEDD8-conjugating enzyme Ubc12 (ube2m) from Xenopus tropicalis (Western clawed frog).